The chain runs to 182 residues: Adenine phosphoribosyltransferase (182 aa).

The protein belongs to the purine/pyrimidine phosphoribosyltransferase family. In terms of assembly, homodimer.

The protein localises to the cytoplasm. The catalysed reaction is AMP + diphosphate = 5-phospho-alpha-D-ribose 1-diphosphate + adenine. It functions in the pathway purine metabolism; AMP biosynthesis via salvage pathway; AMP from adenine: step 1/1. Functionally, catalyzes a salvage reaction resulting in the formation of AMP, that is energically less costly than de novo synthesis. The sequence is that of Adenine phosphoribosyltransferase from Saccharopolyspora erythraea (strain ATCC 11635 / DSM 40517 / JCM 4748 / NBRC 13426 / NCIMB 8594 / NRRL 2338).